The sequence spans 565 residues: Oxygen-dependent choline dehydrogenase (565 aa).

Aspartate 6–glutamate 35 contributes to the FAD binding site. Histidine 475 acts as the Proton acceptor in catalysis.

It belongs to the GMC oxidoreductase family. The cofactor is FAD.

It carries out the reaction choline + A = betaine aldehyde + AH2. It catalyses the reaction betaine aldehyde + NAD(+) + H2O = glycine betaine + NADH + 2 H(+). It participates in amine and polyamine biosynthesis; betaine biosynthesis via choline pathway; betaine aldehyde from choline (cytochrome c reductase route): step 1/1. Its function is as follows. Involved in the biosynthesis of the osmoprotectant glycine betaine. Catalyzes the oxidation of choline to betaine aldehyde and betaine aldehyde to glycine betaine at the same rate. The chain is Oxygen-dependent choline dehydrogenase from Pseudomonas putida (strain ATCC 700007 / DSM 6899 / JCM 31910 / BCRC 17059 / LMG 24140 / F1).